Here is a 416-residue protein sequence, read N- to C-terminus: Phosphoglycerate kinase (416 aa).

(2R)-3-phosphoglycerate is bound by residues V23, D24, F25, N26, Q38, R39, S62, H63, G65, R66, L121, R122, H168, and R169. G212 contributes to the ADP binding site. Residue G212 participates in CDP binding. Residues A213 and K214 each contribute to the AMP site. A213 contributes to the ATP binding site. A213 is a Mg(2+) binding site. D217 is a CDP binding site. A Mg(2+)-binding site is contributed by D217. An AMP-binding site is contributed by K218. Residue K218 coordinates ATP. G236 provides a ligand contact to ADP. G236 provides a ligand contact to CDP. AMP contacts are provided by G237 and G311. G237 and G311 together coordinate ATP. CDP is bound by residues G336 and F341. Position 341 (F341) interacts with ADP. E342 serves as a coordination point for AMP. ATP is bound by residues E342, D373, and T374. Residue D373 participates in Mg(2+) binding.

The protein belongs to the phosphoglycerate kinase family. As to quaternary structure, monomer. Requires Mg(2+) as cofactor.

Its subcellular location is the cytoplasm. It is found in the mitochondrion. It carries out the reaction (2R)-3-phosphoglycerate + ATP = (2R)-3-phospho-glyceroyl phosphate + ADP. It participates in carbohydrate degradation; glycolysis; pyruvate from D-glyceraldehyde 3-phosphate: step 2/5. In terms of biological role, catalyzes one of the two ATP producing reactions in the glycolytic pathway via the reversible conversion of 1,3-diphosphoglycerate to 3-phosphoglycerate. Both L- and D- forms of purine and pyrimidine nucleotides can be used as substrates, but the activity is much lower on pyrimidines. Negatively regulates the biosynthesis of acetyl-CoA from pyruvate in the mitochondrion. This is Phosphoglycerate kinase (PGK1) from Komagataella pastoris (Yeast).